Here is a 352-residue protein sequence, read N- to C-terminus: Glycerol-1-phosphate dehydrogenase [NAD(P)+] (352 aa).

Residues G98–D102 and T120–S123 each bind NAD(+). D125 serves as a coordination point for substrate. S129 is a binding site for NAD(+). Substrate is bound at residue D172. 2 residues coordinate Zn(2+): D172 and H252. H256 lines the substrate pocket. H268 is a Zn(2+) binding site.

The protein belongs to the glycerol-1-phosphate dehydrogenase family. It depends on Zn(2+) as a cofactor.

The protein resides in the cytoplasm. The enzyme catalyses sn-glycerol 1-phosphate + NAD(+) = dihydroxyacetone phosphate + NADH + H(+). It carries out the reaction sn-glycerol 1-phosphate + NADP(+) = dihydroxyacetone phosphate + NADPH + H(+). The protein operates within membrane lipid metabolism; glycerophospholipid metabolism. Functionally, catalyzes the NAD(P)H-dependent reduction of dihydroxyacetonephosphate (DHAP or glycerone phosphate) to glycerol 1-phosphate (G1P). The G1P thus generated is used as the glycerophosphate backbone of phospholipids in the cellular membranes of Archaea. This Haloarcula marismortui (strain ATCC 43049 / DSM 3752 / JCM 8966 / VKM B-1809) (Halobacterium marismortui) protein is Glycerol-1-phosphate dehydrogenase [NAD(P)+].